The primary structure comprises 291 residues: ATP synthase gamma chain (291 aa).

This sequence belongs to the ATPase gamma chain family. F-type ATPases have 2 components, CF(1) - the catalytic core - and CF(0) - the membrane proton channel. CF(1) has five subunits: alpha(3), beta(3), gamma(1), delta(1), epsilon(1). CF(0) has three main subunits: a, b and c.

It is found in the cell membrane. Produces ATP from ADP in the presence of a proton gradient across the membrane. The gamma chain is believed to be important in regulating ATPase activity and the flow of protons through the CF(0) complex. The protein is ATP synthase gamma chain of Buchnera aphidicola subsp. Schizaphis graminum (strain Sg).